The sequence spans 587 residues: Sulfite reductase [NADPH] hemoprotein beta-component (587 aa).

Residues 1 to 13 (MQSTDNDLSQSPP) are compositionally biased toward polar residues. The interval 1 to 20 (MQSTDNDLSQSPPKLSADEQ) is disordered. Residues cysteine 439, cysteine 445, cysteine 484, and cysteine 488 each contribute to the [4Fe-4S] cluster site. Siroheme is bound at residue cysteine 488.

It belongs to the nitrite and sulfite reductase 4Fe-4S domain family. Alpha(8)-beta(8). The alpha component is a flavoprotein, the beta component is a hemoprotein. Requires siroheme as cofactor. [4Fe-4S] cluster serves as cofactor.

It catalyses the reaction hydrogen sulfide + 3 NADP(+) + 3 H2O = sulfite + 3 NADPH + 4 H(+). It functions in the pathway sulfur metabolism; hydrogen sulfide biosynthesis; hydrogen sulfide from sulfite (NADPH route): step 1/1. Its function is as follows. Component of the sulfite reductase complex that catalyzes the 6-electron reduction of sulfite to sulfide. This is one of several activities required for the biosynthesis of L-cysteine from sulfate. The protein is Sulfite reductase [NADPH] hemoprotein beta-component of Bordetella petrii (strain ATCC BAA-461 / DSM 12804 / CCUG 43448).